A 126-amino-acid polypeptide reads, in one-letter code: Large-conductance mechanosensitive channel (126 aa).

3 consecutive transmembrane segments (helical) span residues 14-34, 40-60, and 67-87; these read VIDL…VTSL, MPLL…FTFV, and GLFI…FLFI.

It belongs to the MscL family. As to quaternary structure, homopentamer.

It localises to the cell membrane. In terms of biological role, channel that opens in response to stretch forces in the membrane lipid bilayer. May participate in the regulation of osmotic pressure changes within the cell. The chain is Large-conductance mechanosensitive channel from Bacillus licheniformis (strain ATCC 14580 / DSM 13 / JCM 2505 / CCUG 7422 / NBRC 12200 / NCIMB 9375 / NCTC 10341 / NRRL NRS-1264 / Gibson 46).